A 337-amino-acid chain; its full sequence is 5-dehydro-2-deoxygluconokinase (337 aa).

Belongs to the carbohydrate kinase PfkB family.

It catalyses the reaction 5-dehydro-2-deoxy-D-gluconate + ATP = 6-phospho-5-dehydro-2-deoxy-D-gluconate + ADP + H(+). It participates in polyol metabolism; myo-inositol degradation into acetyl-CoA; acetyl-CoA from myo-inositol: step 5/7. In terms of biological role, catalyzes the phosphorylation of 5-dehydro-2-deoxy-D-gluconate (2-deoxy-5-keto-D-gluconate or DKG) to 6-phospho-5-dehydro-2-deoxy-D-gluconate (DKGP). This is 5-dehydro-2-deoxygluconokinase from Geobacillus thermodenitrificans (strain NG80-2).